Here is a 768-residue protein sequence, read N- to C-terminus: Cullin-3 (768 aa).

Residues 677–698 (VAAKQGESDPERKETRQKVDDD) form a disordered region. The segment covering 682-698 (GESDPERKETRQKVDDD) has biased composition (basic and acidic residues). The Cullin neddylation domain occupies 698–760 (DRKHEIEAAI…REYLARTPED (63 aa)). K712 participates in a covalent cross-link: Glycyl lysine isopeptide (Lys-Gly) (interchain with G-Cter in NEDD8).

This sequence belongs to the cullin family. Component of multiple BCR (BTB-CUL3-RBX1) E3 ubiquitin-protein ligase complexes formed of cul3, rbx1 and a variable BTB domain-containing protein acting as both, adapter to cullin and substrate recognition subunit. Interacts with btbd6. In terms of processing, neddylated. Attachment of NEDD8 is required for the E3 ubiquitin-protein ligase activity of the SCF-like complex.

The protein resides in the nucleus. It functions in the pathway protein modification; protein ubiquitination. Probable core component of cullin-based SCF-like E3 ubiquitin-protein ligase complexes which mediate the ubiquitination and subsequent proteasomal degradation of target proteins. The E3 ubiquitin-protein ligase activity of the complex is dependent on the neddylation of the cullin subunit. Involved in ER-Golgi transport by regulating the size of COPII coats, thereby playing a key role in collagen export, which is required for embryonic stem (ES) cells division. May play a role in the regulation of mittotic entry via ubiquitination of aurka. This chain is Cullin-3 (cul3), found in Xenopus tropicalis (Western clawed frog).